The chain runs to 819 residues: DNA topoisomerase 4 subunit A (819 aa).

One can recognise a Topo IIA-type catalytic domain in the interval 30–496 (LPDIRDGLKP…QIIEIDTASL (467 aa)). The O-(5'-phospho-DNA)-tyrosine intermediate role is filled by Tyr118.

The protein belongs to the type II topoisomerase GyrA/ParC subunit family. ParC type 2 subfamily. In terms of assembly, heterotetramer composed of ParC and ParE.

It is found in the cell membrane. The catalysed reaction is ATP-dependent breakage, passage and rejoining of double-stranded DNA.. Functionally, topoisomerase IV is essential for chromosome segregation. It relaxes supercoiled DNA. Performs the decatenation events required during the replication of a circular DNA molecule. This Streptococcus pyogenes serotype M3 (strain ATCC BAA-595 / MGAS315) protein is DNA topoisomerase 4 subunit A.